The sequence spans 342 residues: Fatty acid desaturase 6 (342 aa).

2 helical membrane passes run 39 to 59 (GVDC…FLCL) and 63 to 83 (SPLV…TLTV). Positions 87 to 91 (HLATH) match the Histidine box-1 motif. Positions 124–128 (HVKMH) match the Histidine box-2 motif. The next 2 membrane-spanning stretches (helical) occupy residues 151–171 (YVYM…VAVE) and 185–205 (LGLI…VSGF). A Histidine box-3 motif is present at residues 277-281 (HVEHH).

Belongs to the fatty acid desaturase type 1 family.

It is found in the membrane. Its pathway is lipid metabolism; fatty acid metabolism. In Bos taurus (Bovine), this protein is Fatty acid desaturase 6 (FADS6).